The chain runs to 304 residues: Killer cell immunoglobulin-like receptor 2DS1 (304 aa).

An N-terminal signal peptide occupies residues 1–21 (MSLTVVSMACVGFFLLQGAWP). Topologically, residues 22 to 245 (HEGVHRKPSL…SETGNPRHLH (224 aa)) are extracellular. 2 Ig-like C2-type domains span residues 42–107 (EETV…VTHS) and 142–205 (GENV…FRDS). Residues Cys49 and Cys100 are joined by a disulfide bond. N-linked (GlcNAc...) asparagine glycans are attached at residues Asn67, Asn84, Asn144, and Asn178. A disulfide bond links Cys149 and Cys198. The tract at residues 220–239 (VTGNPSNSWPSPTEPSSETG) is disordered. Positions 223–239 (NPSNSWPSPTEPSSETG) are enriched in low complexity. Residues 246–264 (VLIGTSVVKIPFTILLFFL) form a helical membrane-spanning segment. Over 265-304 (LHRWCSDKKNAAVMDQEPAGNRTVNSEDSDEQDHQEVSYA) the chain is Cytoplasmic. The tract at residues 280–304 (QEPAGNRTVNSEDSDEQDHQEVSYA) is disordered.

The protein belongs to the immunoglobulin superfamily. As to quaternary structure, interacts with the adapter protein TYROBP/DAP12; the interaction enhances KIR2DS1 stability at the cell surface. As to expression, expressed by NK cells.

It is found in the cell membrane. In terms of biological role, receptor on natural killer (NK) cells for some HLA-C alleles such as w6. Does not inhibit the activity of NK cells. The protein is Killer cell immunoglobulin-like receptor 2DS1 of Homo sapiens (Human).